A 119-amino-acid polypeptide reads, in one-letter code: Large ribosomal subunit protein uL22 (119 aa).

The protein belongs to the universal ribosomal protein uL22 family. Part of the 50S ribosomal subunit.

Functionally, this protein binds specifically to 23S rRNA; its binding is stimulated by other ribosomal proteins, e.g. L4, L17, and L20. It is important during the early stages of 50S assembly. It makes multiple contacts with different domains of the 23S rRNA in the assembled 50S subunit and ribosome. The globular domain of the protein is located near the polypeptide exit tunnel on the outside of the subunit, while an extended beta-hairpin is found that lines the wall of the exit tunnel in the center of the 70S ribosome. The protein is Large ribosomal subunit protein uL22 of Rickettsia prowazekii (strain Madrid E).